The primary structure comprises 489 residues: Serotonin-gated chloride channel mod-1 (489 aa).

Residues 1–20 (MKFIPEITLLLLLFVHSTQA) form the signal peptide. Topologically, residues 21 to 240 (KGKRRKCPEG…VTFTFKRRYG (220 aa)) are extracellular. Residues Asn-44, Asn-103, and Asn-144 are each glycosylated (N-linked (GlcNAc...) asparagine). Serotonin contacts are provided by Tyr-180 and Trp-226. Transmembrane regions (helical) follow at residues 241–261 (FYII…WVSF), 274–294 (VGIS…KNLP), and 304–324 (VWML…AFVC). Topologically, residues 325–458 (YISRCQNSVR…ARFHPEAVDK (134 aa)) are cytoplasmic. The disordered stretch occupies residues 365 to 398 (GSVISHYHPTSNGNGNNNRHDTPQVTGRGSLHRN). Residues 372–391 (HPTSNGNGNNNRHDTPQVTG) are compositionally biased toward polar residues. A helical transmembrane segment spans residues 459–479 (FSIVAFPLAFTMFNLVYWWHY).

The protein belongs to the ligand-gated ion channel (TC 1.A.9) family. In terms of tissue distribution, expressed in a subset of muscles, and head and tail neurons, including RME and GABAergic ventral nerve cord neurons. Expressed in AIY, RME, RID, RIF, ASI, DD1-6, and PVN neurons.

It localises to the membrane. The protein resides in the cell membrane. Functions as a 5-hydroxytryptamine (serotonin) receptor. This receptor is a ligand-gated anion-specific ion channel, selective for chloride ions. Relays a long-range endocrine signal from the body cavity neurons to modulate distal adipose triglyceride lipase atgl-1 function, via the nuclear receptor nhr-76. Together with the G-protein coupled serotonin receptor ser-1 involved in male mating behavior. May mediate an inhibitory effect of serotonin on egg laying. Involved in regulating locomotory behavior, perhaps by modulating interneuronal signaling, acting in concert with G-protein coupled serotonin receptor ser-4. In the presence of food, plays a role in initiating and extending dwelling behavior, perhaps acting in AIY, RIF and ASI neurons, in opposition to neuropeptide PDF-mediated signaling. Plays a role in aversive learning upon exposure to pathogens such as Gram-negative bacterium P.aeruginosa strain PA14; perhaps acting in interneurons in response to serotonin released by the serotonergic ADF neurons. The polypeptide is Serotonin-gated chloride channel mod-1 (Caenorhabditis elegans).